The chain runs to 692 residues: Structure-specific endonuclease subunit SLX4 (692 aa).

The tract at residues 39–59 (SDDEDQDEEQETEIPPEEGDD) is disordered.

It belongs to the SLX4 family. Forms a heterodimer with SLX1. In terms of processing, phosphorylated in response to DNA damage.

It localises to the nucleus. Regulatory subunit of the SLX1-SLX4 structure-specific endonuclease that resolves DNA secondary structures generated during DNA repair and recombination. Has endonuclease activity towards branched DNA substrates, introducing single-strand cuts in duplex DNA close to junctions with ss-DNA. The chain is Structure-specific endonuclease subunit SLX4 from Kluyveromyces lactis (strain ATCC 8585 / CBS 2359 / DSM 70799 / NBRC 1267 / NRRL Y-1140 / WM37) (Yeast).